A 1756-amino-acid polypeptide reads, in one-letter code: RANBP2-like and GRIP domain-containing protein 2 (1756 aa).

The residue at position 21 (Ser21) is a Phosphoserine. 3 TPR repeats span residues 59–92, 583–616, and 647–680; these read PRAHRFLGLLYELEENTEKAVECYRRSLELNPPQ, QKMGRGLNSSYDQQEYIGRSVHYWKKVLPLLKII, and EDAHITFAILDAVHGNIEDAVTAFESIKSVVSYW. A disordered region spans residues 759 to 804; it reads GPLYKNGSLRNADSEIKHSTPSPTKYSLSPSKSYKYSPKTPPRWAE. Positions 777 to 796 are enriched in low complexity; that stretch reads STPSPTKYSLSPSKSYKYSP. The RanBD1 1 domain maps to 1029 to 1165; it reads HFEPVVQMPE…FEECQRLLLD (137 aa). 2 disordered regions span residues 1206–1241 and 1299–1324; these read TKVTEEENKGSGTGAAGASDTTIKPNPENTGPTLEW and AKLNQSGTSVGTDEESDVTQEEERDG. Residues 1228-1237 are compositionally biased toward polar residues; sequence IKPNPENTGP. The span at 1310–1322 shows a compositional bias: acidic residues; that stretch reads TDEESDVTQEEER. In terms of domain architecture, RanBD1 2 spans 1326–1462; sequence YFEPVVPLPD…FDEAKTAQEK (137 aa). A compositionally biased stretch (polar residues) spans 1573–1586; it reads NDSETSSVAQSGSE. The segment at 1573 to 1614 is disordered; sequence NDSETSSVAQSGSESKVEPKKCELSKNSDIEQSSDSKVKNLS. Residues 1587–1610 show a composition bias toward basic and acidic residues; that stretch reads SKVEPKKCELSKNSDIEQSSDSKV. The region spanning 1693–1743 is the GRIP domain; the sequence is QEESAANVEHLKNVLLQFIFLKPGSERESLLPVINTMLQLSPEEKGKLAAV.

The chain is RANBP2-like and GRIP domain-containing protein 2 (RGPD2) from Homo sapiens (Human).